Consider the following 398-residue polypeptide: Phosphoglycerate kinase (398 aa).

Residues 23–25, arginine 38, 61–64, arginine 119, and arginine 152 each bind substrate; these read DLN and HFGR. Residues lysine 202, glutamate 324, and 354–357 contribute to the ATP site; that span reads GGDT.

This sequence belongs to the phosphoglycerate kinase family. Monomer.

Its subcellular location is the cytoplasm. The catalysed reaction is (2R)-3-phosphoglycerate + ATP = (2R)-3-phospho-glyceroyl phosphate + ADP. The protein operates within carbohydrate degradation; glycolysis; pyruvate from D-glyceraldehyde 3-phosphate: step 2/5. This Bradyrhizobium diazoefficiens (strain JCM 10833 / BCRC 13528 / IAM 13628 / NBRC 14792 / USDA 110) protein is Phosphoglycerate kinase.